We begin with the raw amino-acid sequence, 366 residues long: Histidinol-phosphate aminotransferase 2 (366 aa).

The residue at position 226 (Lys-226) is an N6-(pyridoxal phosphate)lysine.

It belongs to the class-II pyridoxal-phosphate-dependent aminotransferase family. Histidinol-phosphate aminotransferase subfamily. Homodimer. Requires pyridoxal 5'-phosphate as cofactor.

It carries out the reaction L-histidinol phosphate + 2-oxoglutarate = 3-(imidazol-4-yl)-2-oxopropyl phosphate + L-glutamate. It functions in the pathway amino-acid biosynthesis; L-histidine biosynthesis; L-histidine from 5-phospho-alpha-D-ribose 1-diphosphate: step 7/9. This Haemophilus influenzae (strain 86-028NP) protein is Histidinol-phosphate aminotransferase 2.